The sequence spans 104 residues: Large ribosomal subunit protein bL21 (104 aa).

This sequence belongs to the bacterial ribosomal protein bL21 family. As to quaternary structure, part of the 50S ribosomal subunit. Contacts protein L20.

Functionally, this protein binds to 23S rRNA in the presence of protein L20. The protein is Large ribosomal subunit protein bL21 of Helicobacter pylori (strain HPAG1).